Reading from the N-terminus, the 242-residue chain is Uridylate kinase (242 aa).

11 to 14 (KLSG) provides a ligand contact to ATP. Residues 19 to 24 (GEKGVG) are involved in allosteric activation by GTP. Gly53 contributes to the UMP binding site. Residues Gly54 and Arg58 each contribute to the ATP site. UMP contacts are provided by residues Asp73 and 134 to 141 (IGSPYFST). The ATP site is built by Asn162, Tyr168, and Asp171.

Belongs to the UMP kinase family. As to quaternary structure, homohexamer.

It is found in the cytoplasm. It carries out the reaction UMP + ATP = UDP + ADP. It participates in pyrimidine metabolism; CTP biosynthesis via de novo pathway; UDP from UMP (UMPK route): step 1/1. With respect to regulation, allosterically activated by GTP. Inhibited by UTP. Its function is as follows. Catalyzes the reversible phosphorylation of UMP to UDP. The polypeptide is Uridylate kinase (Streptococcus pyogenes serotype M1).